Consider the following 227-residue polypeptide: Octanoyltransferase (227 aa).

One can recognise a BPL/LPL catalytic domain in the interval 34–212; the sequence is RQREDGLMLL…AFAEVFPVTW (179 aa). Residues 76–83, 143–145, and 156–158 contribute to the substrate site; these read RGGEVTYH, AIA, and GFA. Cysteine 174 (acyl-thioester intermediate) is an active-site residue.

It belongs to the LipB family.

The protein resides in the cytoplasm. The enzyme catalyses octanoyl-[ACP] + L-lysyl-[protein] = N(6)-octanoyl-L-lysyl-[protein] + holo-[ACP] + H(+). It functions in the pathway protein modification; protein lipoylation via endogenous pathway; protein N(6)-(lipoyl)lysine from octanoyl-[acyl-carrier-protein]: step 1/2. Functionally, catalyzes the transfer of endogenously produced octanoic acid from octanoyl-acyl-carrier-protein onto the lipoyl domains of lipoate-dependent enzymes. Lipoyl-ACP can also act as a substrate although octanoyl-ACP is likely to be the physiological substrate. The chain is Octanoyltransferase from Synechocystis sp. (strain ATCC 27184 / PCC 6803 / Kazusa).